Here is a 366-residue protein sequence, read N- to C-terminus: 3-isopropylmalate dehydrogenase (366 aa).

Residue 76-89 (GPKWDHNPASLRPE) participates in NAD(+) binding. Substrate is bound by residues Arg96, Arg106, Arg134, and Asp222. Asp222, Asp246, and Asp250 together coordinate Mg(2+). 280 to 292 (GSAPDIAGQGKAN) is an NAD(+) binding site.

The protein belongs to the isocitrate and isopropylmalate dehydrogenases family. LeuB type 1 subfamily. As to quaternary structure, homodimer. Mg(2+) serves as cofactor. Mn(2+) is required as a cofactor.

The protein localises to the cytoplasm. The catalysed reaction is (2R,3S)-3-isopropylmalate + NAD(+) = 4-methyl-2-oxopentanoate + CO2 + NADH. It functions in the pathway amino-acid biosynthesis; L-leucine biosynthesis; L-leucine from 3-methyl-2-oxobutanoate: step 3/4. Its function is as follows. Catalyzes the oxidation of 3-carboxy-2-hydroxy-4-methylpentanoate (3-isopropylmalate) to 3-carboxy-4-methyl-2-oxopentanoate. The product decarboxylates to 4-methyl-2 oxopentanoate. This chain is 3-isopropylmalate dehydrogenase (leuB), found in Heyndrickxia coagulans (Weizmannia coagulans).